The chain runs to 642 residues: Bifunctional protein glk (642 aa).

Residues 1–340 are glucokinase; the sequence is MSTGAQSKAA…QLSNRSGGAS (340 aa). 23-28 contacts ATP; the sequence is ADVGGT. Residues 341-417 enclose the HTH rpiR-type domain; sequence SAVFERIRQM…LKLATGLTGT (77 aa). The segment at 341-642 is putative HTH-type transcriptional regulator; sequence SAVFERIRQM…SPAAKDVARD (302 aa). A DNA-binding region (H-T-H motif) is located at residues 377–396; the sequence is IVDIARKADVSQPTVIRFCR. The SIS domain maps to 461-600; sequence AIEILNGARR…AVGVAIRRAS (140 aa). A helical membrane pass occupies residues 576 to 596; sequence SMISRILHLLMIDILAVGVAI.

The protein in the N-terminal section; belongs to the bacterial glucokinase family.

It localises to the membrane. The enzyme catalyses D-glucose + ATP = D-glucose 6-phosphate + ADP + H(+). This is Bifunctional protein glk (glk) from Burkholderia lata (strain ATCC 17760 / DSM 23089 / LMG 22485 / NCIMB 9086 / R18194 / 383).